Here is a 921-residue protein sequence, read N- to C-terminus: Isoleucine--tRNA ligase (921 aa).

The 'HIGH' region motif lies at 57-67 (PYANGELHMGH). Residue glutamate 552 coordinates L-isoleucyl-5'-AMP. The short motif at 593–597 (KMSKS) is the 'KMSKS' region element. ATP is bound at residue lysine 596. Residues cysteine 888, cysteine 891, cysteine 908, and cysteine 911 each coordinate Zn(2+).

The protein belongs to the class-I aminoacyl-tRNA synthetase family. IleS type 1 subfamily. Monomer. Requires Zn(2+) as cofactor.

Its subcellular location is the cytoplasm. The catalysed reaction is tRNA(Ile) + L-isoleucine + ATP = L-isoleucyl-tRNA(Ile) + AMP + diphosphate. Its function is as follows. Catalyzes the attachment of isoleucine to tRNA(Ile). As IleRS can inadvertently accommodate and process structurally similar amino acids such as valine, to avoid such errors it has two additional distinct tRNA(Ile)-dependent editing activities. One activity is designated as 'pretransfer' editing and involves the hydrolysis of activated Val-AMP. The other activity is designated 'posttransfer' editing and involves deacylation of mischarged Val-tRNA(Ile). This chain is Isoleucine--tRNA ligase, found in Listeria welshimeri serovar 6b (strain ATCC 35897 / DSM 20650 / CCUG 15529 / CIP 8149 / NCTC 11857 / SLCC 5334 / V8).